Here is a 27-residue protein sequence, read N- to C-terminus: Protamine-A (27 aa).

Residues 1–27 (ARRRRRHASTKLKRRRRRRRHGKKSHK) form a disordered region.

As to expression, testis.

It is found in the nucleus. The protein localises to the chromosome. Its function is as follows. Protamines substitute for histones in the chromatin of sperm during the haploid phase of spermatogenesis. They compact sperm DNA into a highly condensed, stable and inactive complex. The sequence is that of Protamine-A from Acipenser stellatus (Sevruga).